The chain runs to 131 residues: Profilin-1 (131 aa).

Belongs to the profilin family. In terms of assembly, occurs in many kinds of cells as a complex with monomeric actin in a 1:1 ratio.

Its subcellular location is the cytoplasm. The protein resides in the cytoskeleton. Binds to actin and affects the structure of the cytoskeleton. At high concentrations, profilin prevents the polymerization of actin, whereas it enhances it at low concentrations. By binding to PIP2, it inhibits the formation of IP3 and DG. In Triticum aestivum (Wheat), this protein is Profilin-1 (PRO1).